A 62-amino-acid chain; its full sequence is Large ribosomal subunit protein bL35 (62 aa).

The segment at 25 to 62 (EQAYRSHLSQNKTTKQKRQARKSVQMHSSDVKRFKALI) is disordered. The span at 53–62 (SDVKRFKALI) shows a compositional bias: basic and acidic residues.

Belongs to the bacterial ribosomal protein bL35 family.

The chain is Large ribosomal subunit protein bL35 from Mycoplasmopsis fermentans (Mycoplasma fermentans).